We begin with the raw amino-acid sequence, 136 residues long: Flagellar assembly factor FliW 2 (136 aa).

The protein belongs to the FliW family. In terms of assembly, interacts with translational regulator CsrA and flagellin(s).

The protein resides in the cytoplasm. Functionally, acts as an anti-CsrA protein, binds CsrA and prevents it from repressing translation of its target genes, one of which is flagellin. Binds to flagellin and participates in the assembly of the flagellum. This Wolinella succinogenes (strain ATCC 29543 / DSM 1740 / CCUG 13145 / JCM 31913 / LMG 7466 / NCTC 11488 / FDC 602W) (Vibrio succinogenes) protein is Flagellar assembly factor FliW 2.